The following is a 132-amino-acid chain: Fluoride-specific ion channel FluC 1 (132 aa).

Transmembrane regions (helical) follow at residues 11 to 31, 37 to 57, 70 to 92, and 105 to 125; these read AVFA…ALAI, WPWP…YFTT, RPLL…VETI, and AYSV…TVLV. Residues Gly79 and Thr82 each contribute to the Na(+) site.

It belongs to the fluoride channel Fluc/FEX (TC 1.A.43) family.

Its subcellular location is the cell membrane. The catalysed reaction is fluoride(in) = fluoride(out). With respect to regulation, na(+) is not transported, but it plays an essential structural role and its presence is essential for fluoride channel function. In terms of biological role, fluoride-specific ion channel. Important for reducing fluoride concentration in the cell, thus reducing its toxicity. In Mycobacterium bovis (strain ATCC BAA-935 / AF2122/97), this protein is Fluoride-specific ion channel FluC 1.